Consider the following 517-residue polypeptide: MALALRRLSSSVKKPISLLSSNGGSLRFMSSLSTAAMAESEKSRSSWIKQLNASLDEIDPEVADIIELEKARQWKGFELIPSENFTSLSVMQAVGSVMTNKYSEGYPGARYYGGNEYIDMAETLCQKRALEAFQLDPSKWGVNVQSLSGSPANFQVYTALLKPHERIMALDLPHGGHLSHGYQTDTKKISAVSIFFETMPYRLDENTGYIDYDQLEKSAVLFRPKLIVAGASAYARLYDYARIRKVCNKQKAVMLADMAHISGLVAAGVIPSPFEYADVVTTTTHKSLRGPRGAMIFFRKGLKEINKQGKEVMYDYEDRINQAVFPGLQGGPHNHTITGLAVALKQARTPEYKAYQDQVLRNCSKFAETLLAKGYDLVSGGTDNHLVLVNLKNKGIDGSRVEKVLELVHIAANKNTVPGDVSAMVPGGIRMGTPALTSRGFIEEDFAKVAEYFDLAVKIALKIKAESQGTKLKDFVATMQSNEKLQSEMSKLREMVEEYAKQFPTIGFEKETMRYKE.

The transit peptide at 1 to 29 (MALALRRLSSSVKKPISLLSSNGGSLRFM) directs the protein to the mitochondrion. Ser82 is a binding site for L-serine. Pemetrexed-binding positions include Ser82, Tyr102, Glu104, Tyr112, 148–150 (SGS), and His177. The L-serine site is built by Glu104 and Tyr112. Glu104 provides a ligand contact to methotrexate. 184–186 (TDT) contacts methotrexate. Ser232 and His260 together coordinate pemetrexed. 2 residues coordinate L-serine: His260 and Lys286. Residue Lys286 is modified to N6-(pyridoxal phosphate)lysine. Gly331 is a binding site for pemetrexed. Lys414 is a binding site for methotrexate. Arg430 lines the L-serine pocket. A pemetrexed-binding site is contributed by Arg430.

This sequence belongs to the SHMT family. In terms of assembly, homotetramer. The cofactor is pyridoxal 5'-phosphate. Ubiquitous. Mainly expressed in the shoot apical meristem and roots. Also detected in the leaf vasculature, especially in the protoxylem and adjacent cell layers.

Its subcellular location is the mitochondrion. The catalysed reaction is (6R)-5,10-methylene-5,6,7,8-tetrahydrofolate + glycine + H2O = (6S)-5,6,7,8-tetrahydrofolate + L-serine. It functions in the pathway one-carbon metabolism; tetrahydrofolate interconversion. Its activity is regulated as follows. Inhibited by the antifolate drugs methotrexate and pemetrexed. Functions outside the photorespiratory pathway in catalyzing the interconversion of serine and glycine with the conversion of tetrahydrofolate (THF) into 5,10-methylene-THF. In Arabidopsis thaliana (Mouse-ear cress), this protein is Serine hydroxymethyltransferase 2, mitochondrial.